The primary structure comprises 174 residues: Squamosa promoter-binding-like protein 4 (174 aa).

A disordered region spans residues 1 to 42 (MEGKRSQGQGYMKKKSYLVEEDMETDTDEEEEVGRDRVRGSR). Over residues 19-33 (VEEDMETDTDEEEEV) the composition is skewed to acidic residues. The segment at 51–128 (LRLCQVDRCT…AGHNERRRKS (78 aa)) adopts an SBP-type zinc-finger fold. Residues C54, C59, C76, H79, C95, C98, H102, and C114 each coordinate Zn(2+). A Bipartite nuclear localization signal motif is present at residues 111-127 (KRSCRRRLAGHNERRRK). Over residues 118 to 127 (LAGHNERRRK) the composition is skewed to basic residues. 2 disordered regions span residues 118 to 148 (LAGHNERRRKSSGESTYGEGSGRRGINGQVV) and 155 to 174 (SRVEMTLPMPNSSFKRPQIR). Residues 163–174 (MPNSSFKRPQIR) show a composition bias toward polar residues.

Requires Zn(2+) as cofactor. As to expression, expressed in the rib meristem and inter-primordial tissue of the inflorescence apex.

The protein localises to the nucleus. The protein resides in the cytoplasm. Functionally, trans-acting factor that binds specifically to the consensus nucleotide sequence 5'-TNCGTACAA-3' of AP1 promoter. Promotes both vegetative phase change and flowering. This Arabidopsis thaliana (Mouse-ear cress) protein is Squamosa promoter-binding-like protein 4 (SPL4).